Reading from the N-terminus, the 337-residue chain is Protoheme IX farnesyltransferase (337 aa).

A compositionally biased stretch (polar residues) spans 1–17; that stretch reads MPFSISKDTVSNQTTHV. Positions 1–41 are disordered; the sequence is MPFSISKDTVSNQTTHVATAPASQRPDPVETKVEQEQGRPR. Basic and acidic residues predominate over residues 27–41; it reads DPVETKVEQEQGRPR. Transmembrane regions (helical) follow at residues 59-79, 81-101, 130-150, 153-173, 196-216, 250-270, 271-291, and 311-331; these read IIELLLVTTLPVMFLASHGVP, LGLVIATMVGGLFAAASANVF, SALIYGIILWIIATIILGFGA, LSAALALIANLFYVFVYSMLL, WTAVTGSVGWEPLVLFFIVFW, VAIQILIYTVMTVAISLVLWP, VAHMGWIYVVVAVVSGAVFIV, and PMGLFHWSNTYLSLLFLAIAV.

This sequence belongs to the UbiA prenyltransferase family. Protoheme IX farnesyltransferase subfamily.

It is found in the cell membrane. The enzyme catalyses heme b + (2E,6E)-farnesyl diphosphate + H2O = Fe(II)-heme o + diphosphate. It participates in porphyrin-containing compound metabolism; heme O biosynthesis; heme O from protoheme: step 1/1. In terms of biological role, converts heme B (protoheme IX) to heme O by substitution of the vinyl group on carbon 2 of heme B porphyrin ring with a hydroxyethyl farnesyl side group. The polypeptide is Protoheme IX farnesyltransferase (Cutibacterium acnes (strain DSM 16379 / KPA171202) (Propionibacterium acnes)).